Reading from the N-terminus, the 326-residue chain is Vitamin B12 import system permease protein BtuC (326 aa).

9 helical membrane-spanning segments follow: residues 15 to 35 (WLLCLSVLMLLALLLSLCAGE), 61 to 81 (LAVLLVGAALAISGAVMQALF), 88 to 108 (PGLLGVSNGAGVGLIAAVLLG), 112 to 132 (LPNWALGLCAIAGALIITLIL), 146 to 166 (LLAGVALGIICSALMTWAIYF), 184 to 204 (GGVDWRQSWLMLALIPVLLWI), 240 to 260 (GWMVGVSVALAGAIGFIGLVI), 274 to 294 (VLLPGCALAGASALLLADVVA), and 302 to 322 (ELPIGVVTATLGAPVFIWLLL).

This sequence belongs to the binding-protein-dependent transport system permease family. FecCD subfamily. The complex is composed of two ATP-binding proteins (BtuD), two transmembrane proteins (BtuC) and a solute-binding protein (BtuF).

Its subcellular location is the cell inner membrane. Functionally, part of the ABC transporter complex BtuCDF involved in vitamin B12 import. Involved in the translocation of the substrate across the membrane. This is Vitamin B12 import system permease protein BtuC from Escherichia coli O8 (strain IAI1).